The sequence spans 417 residues: Acetyltransferase cdmC (417 aa).

A glycan (N-linked (GlcNAc...) asparagine) is linked at N64. Transmembrane regions (helical) follow at residues 308–328, 357–377, and 389–409; these read IPDG…GYLV, GIFW…YPLL, and LVES…AFIL.

It belongs to the wax synthase family.

It is found in the membrane. It catalyses the reaction chrodrimanin A + acetyl-CoA = chrodrimanin B + CoA. The protein operates within secondary metabolite biosynthesis; terpenoid biosynthesis. Its function is as follows. Acetyltransferase; part of the gene cluster that mediates the biosynthesis of chrodrimanin B, a meroterpenoid that acts as a potent blocker of insect GABA-gated chloride channels. The first step of the pathway is the biosynthesis of 6-hydroxymellein by the polyketide synthase cdmE. The prenyltransferase cdmH acts as a 6-hydroxymellein 5-farnesyltransferase and produces the hydrophobic metabolite verruculide C. The FAD-dependent monooxygenase cdmI further converts verruculide C into verruculide B. The terpene cyclase cdmG then produced the pentacyclic molecule 3-hydroxypentacecilide A, the backbone structure of chrodrimanin B, via folding the farnesyl moiety of the substrate into the chair-boat conformation. The short-chain dehydrogenase/reductase cdmF functions as the 3-OH dehydrogenase that oxidizes the C-3 hydroxyl group of 3-hydroxypentacecilide A and produces chrodrimanin C, the dehydrogenated product of 3-hydroxypentacecilide A. The cytochrome P450 monooxygenase cdmJ then accepts both 3-hydroxypentacecilide A and chrodrimanin C and functions as a C-7-beta-hydroxylase to produce respectively chrodrimanin H and chrodrimanin F. The dioxygenase cdmA accepts chrodrimanin H to afford chrodrimanin E, which is further transformed to chrodrimanin A by the dioxygenase cdmD. CdmA can also accept chrodrimanin C as substrate to convert it into verruculide A, which is further converted into chrodrimanin T by cdmD. The last step of the biosynthesis is proposed to be performed by the acetyltransferase cdmC which acetylates chrodrimanin A to yield chrodrimanin B. The pathway may also lead to the production of additional shunt products, including chrodrimanins T and U. In Talaromyces verruculosus (Penicillium verruculosum), this protein is Acetyltransferase cdmC.